A 1004-amino-acid polypeptide reads, in one-letter code: Protein CHUP1, chloroplastic (1004 aa).

The tract at residues 1–25 (MFVRIGFVVAASIAAVTVKRLNVKP) is required for chloroplast localization. Residues 22 to 63 (NVKPSKPSKPSDNGEGGDKEQSVDPDYNLNDKNLQEEEEEEE) form a disordered region. Residues 123-341 (EMAYNDGELE…KQVEGLQMNR (219 aa)) are a coiled coil. Residues 269–290 (LEVQVMELKRKNRELQHEKREL) form a leucine-zipper 1 region. Disordered stretches follow at residues 398–482 (GSER…SMNK), 504–536 (FGQV…GEGL), 612–718 (TATG…GNKV), and 736–755 (SKKE…SSAA). Ser399 bears the Phosphoserine mark. The span at 409-419 (ESNYSQPSSPG) shows a compositional bias: polar residues. The segment covering 427–439 (SMDSSTSRFSSFS) has biased composition (low complexity). Polar residues-rich tracts occupy residues 504–517 (FGQV…TPET) and 612–624 (TATG…SNES). Over residues 670–706 (ARPPLPGGGPPPPPPPPGGGPPPPPGGGPPPPPPPPG) the composition is skewed to pro residues. Residues 744–755 (LISSGTGNSSAA) are compositionally biased toward polar residues. The segment at 802–823 (LLAFVSWLDEELSFLVDERAVL) is leucine-zipper 2. A disordered region spans residues 979-1004 (RSRAKTESGDNNNNNNNNSNEEESVN).

In terms of tissue distribution, expressed in cauline leaves, rosette leaves, stems and flowers, but not in roots.

It localises to the plastid. The protein localises to the chloroplast outer membrane. Required for the positioning and movement of chloroplasts. Interacts with profilin and actin independent of its polymerization status. Regulates chloroplast localization by anchoring chloroplasts to the plasma membrane and forming a bridge to the actin cytoskeleton. The protein is Protein CHUP1, chloroplastic (CHUP1) of Arabidopsis thaliana (Mouse-ear cress).